The chain runs to 251 residues: Isopentenyl-diphosphate delta-isomerase (251 aa).

Lys49 contributes to the substrate binding site. Mg(2+) contacts are provided by His53 and His66. A Nudix hydrolase domain is found at 64 to 212 (LLHRAFSVFL…SNSFTPWFKL (149 aa)). Substrate-binding residues include Arg86 and Lys90. Cys102 is an active-site residue. Residue Ser103 participates in substrate binding. Residues Glu162 and Glu164 each coordinate Mg(2+). Glu164 is an active-site residue.

Belongs to the IPP isomerase type 1 family. It depends on Mg(2+) as a cofactor.

The protein resides in the cytoplasm. It carries out the reaction isopentenyl diphosphate = dimethylallyl diphosphate. Its pathway is isoprenoid biosynthesis; dimethylallyl diphosphate biosynthesis; dimethylallyl diphosphate from isopentenyl diphosphate: step 1/1. Isopentenyl-diphosphate delta-isomerase; part of the second module of ergosterol biosynthesis pathway that includes the middle steps of the pathway. The second module is carried out in the vacuole and involves the formation of farnesyl diphosphate, which is also an important intermediate in the biosynthesis of ubiquinone, dolichol, heme and prenylated proteins. Activity by the mevalonate kinase first converts mevalonate into 5-phosphomevalonate. 5-phosphomevalonate is then further converted to 5-diphosphomevalonate by the phosphomevalonate kinase. The diphosphomevalonate decarboxylase then produces isopentenyl diphosphate. The isopentenyl-diphosphate delta-isomerase then catalyzes the 1,3-allylic rearrangement of the homoallylic substrate isopentenyl (IPP) to its highly electrophilic allylic isomer, dimethylallyl diphosphate (DMAPP). Finally the farnesyl diphosphate synthase catalyzes the sequential condensation of isopentenyl pyrophosphate with dimethylallyl pyrophosphate, and then with the resultant geranylpyrophosphate to the ultimate product farnesyl pyrophosphate. This is Isopentenyl-diphosphate delta-isomerase from Phaffia rhodozyma (Yeast).